The sequence spans 471 residues: Glutamate--tRNA ligase (471 aa).

The short motif at 9–19 (PSPTGYLHVGG) is the 'HIGH' region element. Positions 98, 100, 125, and 127 each coordinate Zn(2+). A 'KMSKS' region motif is present at residues 237–241 (KLSKR). Lys240 provides a ligand contact to ATP.

It belongs to the class-I aminoacyl-tRNA synthetase family. Glutamate--tRNA ligase type 1 subfamily. As to quaternary structure, monomer. Zn(2+) is required as a cofactor.

It is found in the cytoplasm. The enzyme catalyses tRNA(Glu) + L-glutamate + ATP = L-glutamyl-tRNA(Glu) + AMP + diphosphate. Catalyzes the attachment of glutamate to tRNA(Glu) in a two-step reaction: glutamate is first activated by ATP to form Glu-AMP and then transferred to the acceptor end of tRNA(Glu). This chain is Glutamate--tRNA ligase, found in Yersinia pseudotuberculosis serotype IB (strain PB1/+).